Reading from the N-terminus, the 288-residue chain is Diaminopimelate epimerase (288 aa).

2 residues coordinate substrate: asparagine 14 and asparagine 67. Catalysis depends on cysteine 76, which acts as the Proton donor. Substrate is bound by residues 77–78 (GN), asparagine 166, asparagine 199, and 217–218 (ER). Cysteine 226 acts as the Proton acceptor in catalysis. Substrate is bound at residue 227–228 (GT).

This sequence belongs to the diaminopimelate epimerase family. In terms of assembly, homodimer.

The protein resides in the cytoplasm. It carries out the reaction (2S,6S)-2,6-diaminopimelate = meso-2,6-diaminopimelate. It functions in the pathway amino-acid biosynthesis; L-lysine biosynthesis via DAP pathway; DL-2,6-diaminopimelate from LL-2,6-diaminopimelate: step 1/1. Catalyzes the stereoinversion of LL-2,6-diaminopimelate (L,L-DAP) to meso-diaminopimelate (meso-DAP), a precursor of L-lysine and an essential component of the bacterial peptidoglycan. The chain is Diaminopimelate epimerase from Bacillus cereus (strain AH820).